The chain runs to 343 residues: N-acetyl-gamma-glutamyl-phosphate reductase (343 aa).

Residue Cys-147 is part of the active site.

It belongs to the NAGSA dehydrogenase family. Type 1 subfamily.

The protein localises to the cytoplasm. It catalyses the reaction N-acetyl-L-glutamate 5-semialdehyde + phosphate + NADP(+) = N-acetyl-L-glutamyl 5-phosphate + NADPH + H(+). The protein operates within amino-acid biosynthesis; L-arginine biosynthesis; N(2)-acetyl-L-ornithine from L-glutamate: step 3/4. Its function is as follows. Catalyzes the NADPH-dependent reduction of N-acetyl-5-glutamyl phosphate to yield N-acetyl-L-glutamate 5-semialdehyde. The polypeptide is N-acetyl-gamma-glutamyl-phosphate reductase (Listeria innocua serovar 6a (strain ATCC BAA-680 / CLIP 11262)).